The chain runs to 495 residues: Potassium voltage-gated channel subfamily A member 1 (495 aa).

The segment at 1–30 (MTVMSGENVDEASAAPGHPQDGSYPRQADH) is disordered. The segment at 1–128 (MTVMSGENVD…FYELGEEAME (128 aa)) is tetramerization domain. The Cytoplasmic portion of the chain corresponds to 1–164 (MTVMSGENVD…LLFEYPESSG (164 aa)). Serine 23 carries the phosphoserine modification. The helical transmembrane segment at 165-186 (PARVIAIVSVMVILISIVIFCL) threads the bilayer. At 187–220 (ETLPELKDDKDFTGTVHRIDNTTVIYNSNIFTDP) the chain is on the extracellular side. The N-linked (GlcNAc...) asparagine glycan is linked to asparagine 207. The chain crosses the membrane as a helical span at residues 221–242 (FFIVETLCIIWFSFELVVRFFA). Cysteine 243 carries the S-palmitoyl cysteine lipid modification. Over 243-253 (CPSKTDFFKNI) the chain is Cytoplasmic. A helical transmembrane segment spans residues 254–274 (MNFIDIVAIIPYFITLGTEIA). At 275-287 (EQEGNQKGEQATS) the chain is on the extracellular side. Residues 288–308 (LAILRVIRLVRVFRIFKLSRH) form a helical; Voltage-sensor membrane-spanning segment. The Cytoplasmic segment spans residues 309–323 (SKGLQILGQTLKASM). The interval 310 to 323 (KGLQILGQTLKASM) is S4-S5 linker. A Phosphoserine; by PKA modification is found at serine 322. A helical membrane pass occupies residues 324-345 (RELGLLIFFLFIGVILFSSAVY). Residues 346 to 359 (FAEAEEAESHFSSI) lie on the Extracellular side of the membrane. The helical intramembrane region spans 360–371 (PDAFWWAVVSMT). Residues 372–377 (TVGYGD) carry the Selectivity filter motif. Residues 372 to 379 (TVGYGDMY) lie within the membrane without spanning it. The Extracellular portion of the chain corresponds to 380 to 386 (PVTIGGK). A helical transmembrane segment spans residues 387-415 (IVGSLCAIAGVLTIALPVPVIVSNFNYFY). The Cytoplasmic portion of the chain corresponds to 416-495 (HRETEGEEQA…VNKSKLLTDV (80 aa)). A phosphoserine mark is found at serine 437 and serine 439. Serine 446 is subject to Phosphoserine; by PKA. The PDZ-binding motif lies at 493-495 (TDV).

The protein belongs to the potassium channel family. A (Shaker) (TC 1.A.1.2) subfamily. Kv1.1/KCNA1 sub-subfamily. In terms of assembly, homotetramer and heterotetramer with other channel-forming alpha subunits, such as KCNA2, KCNA4, KCNA5, KCNA6 and KCNA7. Channel activity is regulated by interaction with the beta subunits KCNAB1 and KCNAB2. Identified in a complex with KCNA2 and KCNAB2. Interacts (via C-terminus) with the PDZ domains of DLG1, DLG2 and DLG4. Interacts with LGI1 within a complex containing LGI1, KCNA4 and KCNAB1. Interacts (via N-terminus) with STX1A; this promotes channel inactivation. Interacts (via N-terminus) with the heterodimer formed by GNB1 and GNG2; this promotes channel inactivation. Can interact simultaneously with STX1A and the heterodimer formed by GNB1 and GNG2. Interacts (via cytoplasmic N-terminal domain) with KCNRG; this inhibits channel activity. Interacts with ANK3; this inhibits channel activity. Interacts with ADAM11. In terms of processing, N-glycosylated. Post-translationally, palmitoylated on Cys-243; which may be required for membrane targeting. Phosphorylated on tyrosine residues. Phosphorylation increases in response to NRG1; this inhibits channel activity. Phosphorylation at Ser-446 regulates channel activity by down-regulating expression at the cell membrane. Detected adjacent to nodes of Ranvier in juxtaparanodal zones in spinal cord nerve fibers, but also in paranodal regions in some myelinated spinal cord axons (at protein level). Detected in the islet of Langerhans.

The protein resides in the cell membrane. It localises to the membrane. The protein localises to the cell projection. Its subcellular location is the axon. It is found in the cytoplasmic vesicle. The protein resides in the perikaryon. It localises to the endoplasmic reticulum. The protein localises to the dendrite. Its subcellular location is the cell junction. It is found in the synapse. The protein resides in the presynaptic cell membrane. It localises to the presynapse. The catalysed reaction is K(+)(in) = K(+)(out). With respect to regulation, inhibited by 1.1 mM 4-aminopyridine (4-AP) and by 20 mM tetraethylammonium (TEA), but not by charybdotoxin (CTX). Inhibited by dendrotoxin (DTX). In terms of biological role, voltage-gated potassium channel that mediates transmembrane potassium transport in excitable membranes, primarily in the brain and the central nervous system, but also in the kidney. Contributes to the regulation of the membrane potential and nerve signaling, and prevents neuronal hyperexcitability. Forms tetrameric potassium-selective channels through which potassium ions pass in accordance with their electrochemical gradient. The channel alternates between opened and closed conformations in response to the voltage difference across the membrane. Can form functional homotetrameric channels and heterotetrameric channels that contain variable proportions of KCNA1, KCNA2, KCNA4, KCNA5, KCNA6, KCNA7, and possibly other family members as well; channel properties depend on the type of alpha subunits that are part of the channel. Channel properties are modulated by cytoplasmic beta subunits that regulate the subcellular location of the alpha subunits and promote rapid inactivation of delayed rectifier potassium channels. In vivo, membranes probably contain a mixture of heteromeric potassium channel complexes, making it difficult to assign currents observed in intact tissues to any particular potassium channel family member. Homotetrameric KCNA1 forms a delayed-rectifier potassium channel that opens in response to membrane depolarization, followed by slow spontaneous channel closure. In contrast, a heterotetrameric channel formed by KCNA1 and KCNA4 shows rapid inactivation. Regulates neuronal excitability in hippocampus, especially in mossy fibers and medial perforant path axons, preventing neuronal hyperexcitability. Response to toxins that are selective for KCNA1, respectively for KCNA2, suggests that heteromeric potassium channels composed of both KCNA1 and KCNA2 play a role in pacemaking and regulate the output of deep cerebellar nuclear neurons. May function as down-stream effector for G protein-coupled receptors and inhibit GABAergic inputs to basolateral amygdala neurons. May contribute to the regulation of neurotransmitter release, such as gamma-aminobutyric acid (GABA) release. Plays a role in regulating the generation of action potentials and preventing hyperexcitability in myelinated axons of the vagus nerve, and thereby contributes to the regulation of heart contraction. Required for normal neuromuscular responses. Regulates the frequency of neuronal action potential firing in response to mechanical stimuli, and plays a role in the perception of pain caused by mechanical stimuli, but does not play a role in the perception of pain due to heat stimuli. Required for normal responses to auditory stimuli and precise location of sound sources, but not for sound perception. The use of toxins that block specific channels suggest that it contributes to the regulation of the axonal release of the neurotransmitter dopamine. Required for normal postnatal brain development and normal proliferation of neuronal precursor cells in the brain. Plays a role in the reabsorption of Mg(2+) in the distal convoluted tubules in the kidney and in magnesium ion homeostasis, probably via its effect on the membrane potential. The polypeptide is Potassium voltage-gated channel subfamily A member 1 (Homo sapiens (Human)).